A 281-amino-acid chain; its full sequence is MLFFEIIKAIIFGIVEGITEWLPISSTGHLILVEEFIHFNNANAAFTNMFNVVIQLGAILAVVVIYFDRLNPFKSGKTAREVQITWQLWAKVILSALPAAVIGLIFDDWLDAHFQNFFSVALMLILYGIAFIYVERRHQGVEPQVTHLVSLPYKTAFFIGLFQVLSLIPGTSRSGATILGGILLGTSRQVATEFTFFLGIPIMFGASLVKVLKFIVSGTILTGSQLFILLVAMLVAFAVSLYVIRFLTDYVKNHDFTFFGKYRIGLGILLLFYGLMKVLFG.

The next 7 helical transmembrane spans lie at 45-65 (AFTN…VVVI), 86-106 (WQLW…GLIF), 114-134 (FQNF…FIYV), 148-168 (LVSL…LSLI), 196-216 (FFLG…KFIV), 224-244 (SQLF…LYVI), and 256-276 (FTFF…YGLM).

This sequence belongs to the UppP family.

It is found in the cell membrane. The catalysed reaction is di-trans,octa-cis-undecaprenyl diphosphate + H2O = di-trans,octa-cis-undecaprenyl phosphate + phosphate + H(+). In terms of biological role, catalyzes the dephosphorylation of undecaprenyl diphosphate (UPP). Confers resistance to bacitracin. The polypeptide is Undecaprenyl-diphosphatase (Streptococcus mutans serotype c (strain ATCC 700610 / UA159)).